Consider the following 105-residue polypeptide: Large ribosomal subunit protein eL42 (105 aa).

Residues 23-52 (KVTQYKKGKESRLAQGRRRYDSKQKGFGGQ) form a disordered region. The segment covering 29–46 (KGKESRLAQGRRRYDSKQ) has biased composition (basic and acidic residues).

This sequence belongs to the eukaryotic ribosomal protein eL42 family.

The protein is Large ribosomal subunit protein eL42 (rpl-44) of Brugia malayi (Filarial nematode worm).